We begin with the raw amino-acid sequence, 201 residues long: MTLRPSLLPLHLLLLLLLSAAVCRAEAGLETESPVRTLQVETLVEPPEPCAEPAAFGDTLHIHYTGSLVDGRIIDTSLTRDPLVIELGQKQVIPGLEQSLLDMCVGEKRRAIIPSHLAYGKRGFPPSVPADAVVQYDVELIALIRANYWLKLVKGILPLVGMAMVPALLGLIGYHLYRKANRPKVSKKKLKEEKRNKSKKK.

An N-terminal signal peptide occupies residues 1 to 27; that stretch reads MTLRPSLLPLHLLLLLLLSAAVCRAEA. The PPIase FKBP-type domain maps to 57 to 144; sequence GDTLHIHYTG…QYDVELIALI (88 aa). Residues 156-176 traverse the membrane as a helical segment; sequence ILPLVGMAMVPALLGLIGYHL.

Belongs to the FKBP-type PPIase family. Interacts with IFITM5.

It is found in the membrane. The catalysed reaction is [protein]-peptidylproline (omega=180) = [protein]-peptidylproline (omega=0). Functionally, PPIases accelerate the folding of proteins during protein synthesis. The chain is Peptidyl-prolyl cis-trans isomerase FKBP11 (FKBP11) from Homo sapiens (Human).